Consider the following 419-residue polypeptide: uncharacterized protein (419 aa).

Belongs to the MT-A70-like family.

It is found in the cytoplasm. This is an uncharacterized protein from Schizosaccharomyces pombe (strain 972 / ATCC 24843) (Fission yeast).